Here is a 191-residue protein sequence, read N- to C-terminus: Peptidyl-tRNA hydrolase (191 aa).

Tyr-14 lines the tRNA pocket. His-19 (proton acceptor) is an active-site residue. TRNA-binding residues include Phe-64, Asn-66, and Asn-113.

It belongs to the PTH family. Monomer.

The protein resides in the cytoplasm. It carries out the reaction an N-acyl-L-alpha-aminoacyl-tRNA + H2O = an N-acyl-L-amino acid + a tRNA + H(+). Hydrolyzes ribosome-free peptidyl-tRNAs (with 1 or more amino acids incorporated), which drop off the ribosome during protein synthesis, or as a result of ribosome stalling. Functionally, catalyzes the release of premature peptidyl moieties from peptidyl-tRNA molecules trapped in stalled 50S ribosomal subunits, and thus maintains levels of free tRNAs and 50S ribosomes. This chain is Peptidyl-tRNA hydrolase, found in Fusobacterium nucleatum subsp. nucleatum (strain ATCC 25586 / DSM 15643 / BCRC 10681 / CIP 101130 / JCM 8532 / KCTC 2640 / LMG 13131 / VPI 4355).